The primary structure comprises 397 residues: Flavohemoprotein (397 aa).

In terms of domain architecture, Globin spans 4–140 (SFSPHTITLI…IANLLKDREA (137 aa)). A heme b-binding site is contributed by His-87. Catalysis depends on charge relay system residues Tyr-97 and Glu-139. The segment at 151 to 397 (GGWIHWRRFV…FGPMDEEMAA (247 aa)) is reductase. The FAD-binding FR-type domain occupies 154-258 (IHWRRFVISK…TPPVGDFFLP (105 aa)). Residues Tyr-192 and 207-210 (RNYS) each bind FAD. 271 to 276 (GVGLTP) serves as a coordination point for NADP(+). 387–390 (FFGP) lines the FAD pocket.

This sequence belongs to the globin family. Two-domain flavohemoproteins subfamily. The protein in the C-terminal section; belongs to the flavoprotein pyridine nucleotide cytochrome reductase family. It depends on heme b as a cofactor. FAD is required as a cofactor.

It carries out the reaction 2 nitric oxide + NADPH + 2 O2 = 2 nitrate + NADP(+) + H(+). The catalysed reaction is 2 nitric oxide + NADH + 2 O2 = 2 nitrate + NAD(+) + H(+). Functionally, is involved in NO detoxification in an aerobic process, termed nitric oxide dioxygenase (NOD) reaction that utilizes O(2) and NAD(P)H to convert NO to nitrate, which protects the bacterium from various noxious nitrogen compounds. Therefore, plays a central role in the inducible response to nitrosative stress. The polypeptide is Flavohemoprotein (Xylella fastidiosa (strain Temecula1 / ATCC 700964)).